A 1308-amino-acid polypeptide reads, in one-letter code: Cilia- and flagella-associated protein 57 C (1308 aa).

WD repeat units follow at residues 57–99, 110–154, 415–454, 504–546, 551–590, 645–689, and 694–733; these read NEYR…RRKN, YNIK…KCLG, NHTGPINSMDICKRKPIIATCSTDKTIKIWDYEKKQIKIS, SPFK…NPSQ, GHTGRVKCIAWSSDDSFLLSCGLDGMILAWKLDQDFQHQQ, LLDI…GKFT, and HDERGVEKMKITNDDRYIITAGKDGCIMVFEIKDKDARGM. Residues 779–1000 are a coiled coil; the sequence is LNSRDDRIRQ…RDKIDGQKKI (222 aa).

Belongs to the CFAP57 family. Forms a heterodimer with CFAP57A. Associates with components of the nexin-dynein regulatory complex (N-DRC) and the CFAP184:CFAP263 complex.

The protein localises to the cell projection. Its subcellular location is the cilium. Its function is as follows. Associates with components of the nexin-dynein regulatory complex (N-DRC), a key regulator of ciliary/flagellar motility, and might act as an inner dynein arm (IDA) hub or linkage. The sequence is that of Cilia- and flagella-associated protein 57 C (CFAP57C) from Tetrahymena thermophila (strain SB210).